A 1011-amino-acid polypeptide reads, in one-letter code: DNA-directed RNA polymerase 2, chloroplastic/mitochondrial (1011 aa).

A disordered region spans residues 307 to 326 (KGDDNEESGGVENETSMKEQ). Residues aspartate 712, lysine 787, and aspartate 944 contribute to the active site.

It belongs to the phage and mitochondrial RNA polymerase family. Interacts with NIP1 and NIP2.

It is found in the plastid. The protein resides in the chloroplast. Its subcellular location is the mitochondrion. The enzyme catalyses RNA(n) + a ribonucleoside 5'-triphosphate = RNA(n+1) + diphosphate. Its function is as follows. DNA-dependent RNA polymerase catalyzes the transcription of DNA into RNA using the four ribonucleoside triphosphates as substrates. The protein is DNA-directed RNA polymerase 2, chloroplastic/mitochondrial (RPOT2) of Arabidopsis thaliana (Mouse-ear cress).